Here is a 220-residue protein sequence, read N- to C-terminus: Pyridoxine/pyridoxamine 5'-phosphate oxidase (220 aa).

Substrate-binding positions include 13-16 (RVEY) and lysine 77. FMN contacts are provided by residues 72 to 77 (RTVLCK), 87 to 88 (FT), lysine 94, and glutamine 116. Positions 134, 138, and 142 each coordinate substrate. Residues 151–152 (QS) and tryptophan 197 each bind FMN. 203–205 (RLH) is a binding site for substrate. Arginine 207 lines the FMN pocket.

This sequence belongs to the pyridoxamine 5'-phosphate oxidase family. As to quaternary structure, homodimer. Requires FMN as cofactor.

The catalysed reaction is pyridoxamine 5'-phosphate + O2 + H2O = pyridoxal 5'-phosphate + H2O2 + NH4(+). The enzyme catalyses pyridoxine 5'-phosphate + O2 = pyridoxal 5'-phosphate + H2O2. Its pathway is cofactor metabolism; pyridoxal 5'-phosphate salvage; pyridoxal 5'-phosphate from pyridoxamine 5'-phosphate: step 1/1. It participates in cofactor metabolism; pyridoxal 5'-phosphate salvage; pyridoxal 5'-phosphate from pyridoxine 5'-phosphate: step 1/1. Catalyzes the oxidation of either pyridoxine 5'-phosphate (PNP) or pyridoxamine 5'-phosphate (PMP) into pyridoxal 5'-phosphate (PLP). In Mycolicibacterium paratuberculosis (strain ATCC BAA-968 / K-10) (Mycobacterium paratuberculosis), this protein is Pyridoxine/pyridoxamine 5'-phosphate oxidase.